Here is a 183-residue protein sequence, read N- to C-terminus: Nucleoside diphosphate kinase (183 aa).

Lys-11 provides a ligand contact to ATP. Positions 56–88 (EWLRSAGQKLLKAYQELGIDPRAKIGTDDPVEV) are insert. ATP is bound by residues Arg-120, Thr-126, Arg-137, and Asn-157. The active-site Pros-phosphohistidine intermediate is the His-160.

It belongs to the NDK family. Mg(2+) serves as cofactor.

It localises to the cytoplasm. It carries out the reaction a 2'-deoxyribonucleoside 5'-diphosphate + ATP = a 2'-deoxyribonucleoside 5'-triphosphate + ADP. It catalyses the reaction a ribonucleoside 5'-diphosphate + ATP = a ribonucleoside 5'-triphosphate + ADP. Major role in the synthesis of nucleoside triphosphates other than ATP. The ATP gamma phosphate is transferred to the NDP beta phosphate via a ping-pong mechanism, using a phosphorylated active-site intermediate. This is Nucleoside diphosphate kinase (ndk) from Pyrobaculum aerophilum (strain ATCC 51768 / DSM 7523 / JCM 9630 / CIP 104966 / NBRC 100827 / IM2).